Reading from the N-terminus, the 64-residue chain is SPbeta prophage-derived uncharacterized protein YosJ (64 aa).

This Bacillus subtilis (strain 168) protein is SPbeta prophage-derived uncharacterized protein YosJ (yosJ).